A 232-amino-acid chain; its full sequence is Lipoprotein-releasing system ATP-binding protein LolD (232 aa).

In terms of domain architecture, ABC transporter spans 11-232; it reads IEVTDLQRAF…LHDGRLIEEY (222 aa). An ATP-binding site is contributed by 47–54; it reads GPSGAGKS.

The protein belongs to the ABC transporter superfamily. Lipoprotein translocase (TC 3.A.1.125) family. In terms of assembly, the complex is composed of two ATP-binding proteins (LolD) and two transmembrane proteins (LolC and LolE).

It is found in the cell inner membrane. Part of the ABC transporter complex LolCDE involved in the translocation of mature outer membrane-directed lipoproteins, from the inner membrane to the periplasmic chaperone, LolA. Responsible for the formation of the LolA-lipoprotein complex in an ATP-dependent manner. The protein is Lipoprotein-releasing system ATP-binding protein LolD of Zymomonas mobilis subsp. mobilis (strain ATCC 31821 / ZM4 / CP4).